Here is a 706-residue protein sequence, read N- to C-terminus: Polyribonucleotide nucleotidyltransferase (706 aa).

Positions 488 and 494 each coordinate Mg(2+). A KH domain is found at 555-614 (PRLFTMKINPDKIRDVIGKGGSVIRALTEETGTQINIDEDGTITIASADPAKAEEAKRRI). The region spanning 624 to 692 (GKIYEGPITK…EKGRIKLSMK (69 aa)) is the S1 motif domain.

It belongs to the polyribonucleotide nucleotidyltransferase family. Mg(2+) is required as a cofactor.

The protein resides in the cytoplasm. It carries out the reaction RNA(n+1) + phosphate = RNA(n) + a ribonucleoside 5'-diphosphate. Its function is as follows. Involved in mRNA degradation. Catalyzes the phosphorolysis of single-stranded polyribonucleotides processively in the 3'- to 5'-direction. This is Polyribonucleotide nucleotidyltransferase from Albidiferax ferrireducens (strain ATCC BAA-621 / DSM 15236 / T118) (Rhodoferax ferrireducens).